We begin with the raw amino-acid sequence, 294 residues long: Bifunctional protein FolD (294 aa).

NADP(+)-binding positions include 166 to 168 (GRS), Ser191, and Ile232.

The protein belongs to the tetrahydrofolate dehydrogenase/cyclohydrolase family. Homodimer.

It carries out the reaction (6R)-5,10-methylene-5,6,7,8-tetrahydrofolate + NADP(+) = (6R)-5,10-methenyltetrahydrofolate + NADPH. It catalyses the reaction (6R)-5,10-methenyltetrahydrofolate + H2O = (6R)-10-formyltetrahydrofolate + H(+). It participates in one-carbon metabolism; tetrahydrofolate interconversion. Functionally, catalyzes the oxidation of 5,10-methylenetetrahydrofolate to 5,10-methenyltetrahydrofolate and then the hydrolysis of 5,10-methenyltetrahydrofolate to 10-formyltetrahydrofolate. The protein is Bifunctional protein FolD of Nitrobacter winogradskyi (strain ATCC 25391 / DSM 10237 / CIP 104748 / NCIMB 11846 / Nb-255).